The sequence spans 594 residues: UvrABC system protein C (594 aa).

The GIY-YIG domain occupies 13-99 (NSSGVYQYFD…IKQLKPKYNI (87 aa)). Residues 205–240 (DRLIKELELKMERLSNNLRFEEALIYRDRIAKIQKI) enclose the UVR domain.

It belongs to the UvrC family. As to quaternary structure, interacts with UvrB in an incision complex.

It is found in the cytoplasm. The UvrABC repair system catalyzes the recognition and processing of DNA lesions. UvrC both incises the 5' and 3' sides of the lesion. The N-terminal half is responsible for the 3' incision and the C-terminal half is responsible for the 5' incision. This chain is UvrABC system protein C, found in Helicobacter pylori (strain ATCC 700392 / 26695) (Campylobacter pylori).